A 191-amino-acid polypeptide reads, in one-letter code: Cell number regulator 1 (191 aa).

Residues 13 to 44 (FSAGAPPTAPPPPAAYHQQQQQHGANMDTSRP) are disordered. Over residues 27-37 (AYHQQQQQHGA) the composition is skewed to low complexity. Residues 91-113 (IASGLVYGLICASTGMGCLYSCL) traverse the membrane as a helical segment.

This sequence belongs to the cornifelin family. In terms of tissue distribution, expressed in roots, coleoptiles, stalks and silks. Detected in leaves, apical meristems, immature ears and pericarps. Highest expression in coleoptiles and silks.

The protein resides in the membrane. Functionally, acts as a negative regulator of cell number. This chain is Cell number regulator 1 (CNR1), found in Zea mays (Maize).